The sequence spans 431 residues: Enolase (431 aa).

Position 167 (Q167) interacts with (2R)-2-phosphoglycerate. Residue E209 is the Proton donor of the active site. Positions 246, 289, and 316 each coordinate Mg(2+). Residues K341, R370, S371, and K392 each contribute to the (2R)-2-phosphoglycerate site. K341 (proton acceptor) is an active-site residue.

It belongs to the enolase family. As to quaternary structure, component of the RNA degradosome, a multiprotein complex involved in RNA processing and mRNA degradation. The cofactor is Mg(2+).

Its subcellular location is the cytoplasm. The protein localises to the secreted. It localises to the cell surface. The catalysed reaction is (2R)-2-phosphoglycerate = phosphoenolpyruvate + H2O. The protein operates within carbohydrate degradation; glycolysis; pyruvate from D-glyceraldehyde 3-phosphate: step 4/5. Catalyzes the reversible conversion of 2-phosphoglycerate (2-PG) into phosphoenolpyruvate (PEP). It is essential for the degradation of carbohydrates via glycolysis. The polypeptide is Enolase (Shewanella oneidensis (strain ATCC 700550 / JCM 31522 / CIP 106686 / LMG 19005 / NCIMB 14063 / MR-1)).